A 79-amino-acid polypeptide reads, in one-letter code: Small ribosomal subunit protein bS16 (79 aa).

Belongs to the bacterial ribosomal protein bS16 family.

This chain is Small ribosomal subunit protein bS16, found in Hahella chejuensis (strain KCTC 2396).